The primary structure comprises 374 residues: Cyclin-dependent kinase 9 (374 aa).

The Protein kinase domain occupies 19-318; it reads YEKLAKIGQG…SDDALNHDFF (300 aa). ATP contacts are provided by residues 25–33 and Lys48; that span reads IGQGTFGEV. Asp151 functions as the Proton acceptor in the catalytic mechanism. The interval 345-374 is disordered; sequence PRRRGHMPQQPANQNRNPATTSQSEFDRVF. Positions 354-368 are enriched in polar residues; the sequence is QPANQNRNPATTSQS.

Belongs to the protein kinase superfamily. CMGC Ser/Thr protein kinase family. CDC2/CDKX subfamily. As to quaternary structure, component of the super elongation complex (SEC). Associates with ccnt1/cyclin-T1, ccnt2/cyclin-T2 or ccnk/cyclin-K to form active P-TEFb.

The protein resides in the nucleus. The protein localises to the cytoplasm. It localises to the PML body. The catalysed reaction is L-seryl-[protein] + ATP = O-phospho-L-seryl-[protein] + ADP + H(+). It catalyses the reaction L-threonyl-[protein] + ATP = O-phospho-L-threonyl-[protein] + ADP + H(+). The enzyme catalyses [DNA-directed RNA polymerase] + ATP = phospho-[DNA-directed RNA polymerase] + ADP + H(+). In terms of biological role, protein kinase involved in the regulation of transcription. Member of the cyclin-dependent kinase pair (CDK9/cyclin-T) complex, also called positive transcription elongation factor b (P-TEFb), which facilitates the transition from abortive to productive elongation by phosphorylating the CTD (C-terminal domain) of the large subunit of RNA polymerase II (RNAP II) polr2a, supt5h and rdbp. This complex is inactive when in the 7SK snRNP complex form. Regulates cytokine inducible transcription networks by facilitating promoter recognition of target transcription factors. P-TEFb is also involved in cotranscriptional histone modification, mRNA processing and mRNA export. This chain is Cyclin-dependent kinase 9, found in Danio rerio (Zebrafish).